The sequence spans 305 residues: tRNA uridine(34) hydroxylase (305 aa).

In terms of domain architecture, Rhodanese spans A125–S219. Residue C179 is the Cysteine persulfide intermediate of the active site.

This sequence belongs to the TrhO family.

It catalyses the reaction uridine(34) in tRNA + AH2 + O2 = 5-hydroxyuridine(34) in tRNA + A + H2O. Catalyzes oxygen-dependent 5-hydroxyuridine (ho5U) modification at position 34 in tRNAs. The polypeptide is tRNA uridine(34) hydroxylase (Brucella abortus (strain S19)).